Consider the following 607-residue polypeptide: Fucose-1-phosphate guanylyltransferase (607 aa).

A disordered region spans residues 1 to 21 (MRAVRRGLREGGAMAAARDPP).

Expressed in many tissues.

It localises to the cytoplasm. The enzyme catalyses beta-L-fucose 1-phosphate + GTP + H(+) = GDP-beta-L-fucose + diphosphate. Its function is as follows. Catalyzes the formation of GDP-L-fucose from GTP and L-fucose-1-phosphate. Functions as a salvage pathway to reutilize L-fucose arising from the turnover of glycoproteins and glycolipids. The sequence is that of Fucose-1-phosphate guanylyltransferase from Homo sapiens (Human).